A 104-amino-acid chain; its full sequence is UPF0235 protein M446_3939 (104 aa).

This sequence belongs to the UPF0235 family.

The polypeptide is UPF0235 protein M446_3939 (Methylobacterium sp. (strain 4-46)).